Consider the following 260-residue polypeptide: MSDTSLTHCSEVLLTARNLCADRGGRRVLEGIDLSIGAGEVVTIIGPNGAGKSTLLKVLLGVEPYSEGQVIRKANLCVGYVPQRMPVDAILPMTVQRMLRLAKEVDETAMLAVLEETGVAHVLHAPLQGLSGGEFQRVLLARAMLRNPQLLVLDEPVQGVDYSGEVALYQLIGALRKRHGCGVLLVSHDLHMVMRDTDRVVCLNRHICCTGTPDHVSGHPEFARLFGDQALQTLALYQHHHHSCTHHMPVDVAIDPQEQA.

In terms of domain architecture, ABC transporter spans 14–229 (LTARNLCADR…PEFARLFGDQ (216 aa)). 46 to 53 (GPNGAGKS) provides a ligand contact to ATP.

The protein belongs to the ABC transporter superfamily. Zinc importer (TC 3.A.1.15.5) family. The complex is composed of two ATP-binding proteins (ZnuC), two transmembrane proteins (ZnuB) and a solute-binding protein (ZnuA).

It localises to the cell inner membrane. It carries out the reaction Zn(2+)(out) + ATP(in) + H2O(in) = Zn(2+)(in) + ADP(in) + phosphate(in) + H(+)(in). Functionally, part of the ABC transporter complex ZnuABC involved in zinc import. Responsible for energy coupling to the transport system. The polypeptide is Zinc import ATP-binding protein ZnuC (Magnetococcus marinus (strain ATCC BAA-1437 / JCM 17883 / MC-1)).